The chain runs to 430 residues: UDP-N-acetylglucosamine 1-carboxyvinyltransferase 1 (430 aa).

Residue 22–23 (KN) participates in phosphoenolpyruvate binding. A UDP-N-acetyl-alpha-D-glucosamine-binding site is contributed by R93. The Proton donor role is filled by C117. 2-(S-cysteinyl)pyruvic acid O-phosphothioketal is present on C117. Residues 122-126 (RPVDL), D305, and V327 each bind UDP-N-acetyl-alpha-D-glucosamine.

This sequence belongs to the EPSP synthase family. MurA subfamily.

The protein localises to the cytoplasm. The enzyme catalyses phosphoenolpyruvate + UDP-N-acetyl-alpha-D-glucosamine = UDP-N-acetyl-3-O-(1-carboxyvinyl)-alpha-D-glucosamine + phosphate. It functions in the pathway cell wall biogenesis; peptidoglycan biosynthesis. Its function is as follows. Cell wall formation. Adds enolpyruvyl to UDP-N-acetylglucosamine. The polypeptide is UDP-N-acetylglucosamine 1-carboxyvinyltransferase 1 (Listeria monocytogenes serotype 4b (strain F2365)).